The sequence spans 424 residues: Enolase (424 aa).

Gln-164 lines the (2R)-2-phosphoglycerate pocket. Catalysis depends on Glu-206, which acts as the Proton donor. 3 residues coordinate Mg(2+): Asp-243, Glu-284, and Asp-311. Lys-336, Arg-365, Ser-366, and Lys-387 together coordinate (2R)-2-phosphoglycerate. Lys-336 functions as the Proton acceptor in the catalytic mechanism.

It belongs to the enolase family. Mg(2+) is required as a cofactor.

It is found in the cytoplasm. The protein resides in the secreted. It localises to the cell surface. It carries out the reaction (2R)-2-phosphoglycerate = phosphoenolpyruvate + H2O. Its pathway is carbohydrate degradation; glycolysis; pyruvate from D-glyceraldehyde 3-phosphate: step 4/5. Catalyzes the reversible conversion of 2-phosphoglycerate (2-PG) into phosphoenolpyruvate (PEP). It is essential for the degradation of carbohydrates via glycolysis. This chain is Enolase, found in Wolbachia sp. subsp. Drosophila simulans (strain wRi).